The sequence spans 514 residues: Na(+)/H(+) antiporter NhaB (514 aa).

12 helical membrane passes run 23-43 (LALL…SFVA), 52-72 (IFTL…LLAI), 97-117 (LLLM…LFIF), 120-140 (LLLS…AAAF), 144-164 (FLDA…FYGI), 202-222 (LMMH…VGEP), 238-258 (FFLR…LTCM), 303-323 (AIIG…VGLI), 357-377 (LTVF…APII), 391-411 (LFYL…VGTI), 447-467 (ATPN…APLI), and 475-495 (VWMA…CVEF).

This sequence belongs to the NhaB Na(+)/H(+) (TC 2.A.34) antiporter family.

The protein localises to the cell inner membrane. It carries out the reaction 2 Na(+)(in) + 3 H(+)(out) = 2 Na(+)(out) + 3 H(+)(in). Functionally, na(+)/H(+) antiporter that extrudes sodium in exchange for external protons. In Salmonella arizonae (strain ATCC BAA-731 / CDC346-86 / RSK2980), this protein is Na(+)/H(+) antiporter NhaB.